The primary structure comprises 302 residues: Late embryogenesis abundant protein D-29 (302 aa).

Disordered stretches follow at residues 25 to 93 (HMPS…AKEY), 168 to 193 (VKNA…LADS), and 205 to 302 (AKEK…NHKN). Basic and acidic residues-rich tracts occupy residues 34 to 70 (RDYS…HAAN) and 79 to 93 (AKDR…AKEY). Residues 205-286 (AKEKVRDMAD…KAEETIESAK (82 aa)) are compositionally biased toward basic and acidic residues.

It belongs to the LEA type 1 family.

LEA protein are late embryonic proteins abundant in higher plant seed embryos. There are two subsets of LEA proteins (5a and 5b), the first ones are expressed when the cotyledon weight reach 80 mg and the second set are expressed above 100 mg. The function of those proteins is not known. This Gossypium hirsutum (Upland cotton) protein is Late embryogenesis abundant protein D-29.